The chain runs to 393 residues: S-adenosylmethionine synthase (393 aa).

H17 contacts ATP. A Mg(2+)-binding site is contributed by D19. Position 45 (E45) interacts with K(+). L-methionine-binding residues include E58 and Q106. The interval 106 to 116 (QSAHIAQGVDA) is flexible loop. ATP is bound by residues 171-173 (DAK), 237-238 (KF), D246, 252-253 (RK), A269, and K273. D246 serves as a coordination point for L-methionine. Position 277 (K277) interacts with L-methionine.

This sequence belongs to the AdoMet synthase family. As to quaternary structure, homotetramer; dimer of dimers. Requires Mg(2+) as cofactor. K(+) is required as a cofactor.

It localises to the cytoplasm. It catalyses the reaction L-methionine + ATP + H2O = S-adenosyl-L-methionine + phosphate + diphosphate. It participates in amino-acid biosynthesis; S-adenosyl-L-methionine biosynthesis; S-adenosyl-L-methionine from L-methionine: step 1/1. Its function is as follows. Catalyzes the formation of S-adenosylmethionine (AdoMet) from methionine and ATP. The overall synthetic reaction is composed of two sequential steps, AdoMet formation and the subsequent tripolyphosphate hydrolysis which occurs prior to release of AdoMet from the enzyme. The sequence is that of S-adenosylmethionine synthase from Jannaschia sp. (strain CCS1).